We begin with the raw amino-acid sequence, 309 residues long: Methyltransferase AacuQ (309 aa).

The methyltransferase domain stretch occupies residues 57-149; that stretch reads DVGAGNGPYA…QLRPGGTFAC (93 aa).

The protein belongs to the methyltransferase superfamily.

It functions in the pathway secondary metabolite biosynthesis. Functionally, methyltransferase; part of the gene cluster that mediates the biosynthesis of the tetrahydroxanthone dimer secalonic acid D. The pathway begins with the synthesis of atrochrysone thioester by the polyketide synthase AacuL. The atrochrysone carboxyl ACP thioesterase AacuM then breaks the thioester bond and releases the atrochrysone carboxylic acid from AacuL. Atrochrysone carboxylic acid is decarboxylated by the decarboxylase AacuI, and oxidized by the anthrone oxygenase AacuG to yield emodin. Emodin is then reduced to emodin hydroquinone by a yet unidentified oxidoreductase. A-ring reduction by the short chain dehydrogenase AacuN, dehydration by the scytalone dehydratase-like protein AacuK and probable spontaneous re-oxidation, results in overall deoxygenation to chrysophanol. Baeyer-Villiger oxidation by the Baeyer-Villiger monooxygenase (BVMO) AacuH then yields monodictyphenone. Monodictyphenone is transformed into compounds with the tetrahydroxanthone skeleton via methylesterification by the methyltransferase AacuQ, followed by the action of the flavin-dependent monooxygenase AacuC, the isomerase AacuP, and the short chain dehydrogenase/reductase AacuF or AacuD. AacuF and AacuD should accept the same compound as a substrate but perform the ketoreduction with a different stereoselectivity, thus yielding blennolides B and A, respectively. In the final step of the biosynthesis, the cytochrome P450 monooxygenase AacuE accepts blennolide B and/or blennolide A to conduct the dimerization reaction to furnish the tetrahydroxanthone dimers, secalonic acids D, B, and F. This chain is Methyltransferase AacuQ, found in Aspergillus aculeatus (strain ATCC 16872 / CBS 172.66 / WB 5094).